The following is a 455-amino-acid chain: Beta-1,4-mannosyltransferase bre-3 (455 aa).

It belongs to the glycosyltransferase 2 family.

It is found in the cytoplasm. It functions in the pathway protein modification; protein glycosylation. Functionally, glycosyltransferase with a proposed role in glycosphingolipid biosynthesis. Involved in susceptibility to pore-forming crystal toxins in conjunction with bre-1, bre-2 and bre-4. Involved in resistance to the nematotoxic C.cinerea galectin Cgl2. Has a role in determining brood size. This chain is Beta-1,4-mannosyltransferase bre-3, found in Caenorhabditis briggsae.